Here is a 67-residue protein sequence, read N- to C-terminus: Protein AaeX (67 aa).

Helical transmembrane passes span 3–23 and 47–67; these read LFPVIVVFGLSFPPIFFELLL and PALFNTALYCCLFYLISRLFV.

It belongs to the AaeX family.

Its subcellular location is the cell membrane. The protein is Protein AaeX of Escherichia coli O157:H7.